Reading from the N-terminus, the 776-residue chain is Rho guanine nucleotide exchange factor 6 (776 aa).

The Calponin-homology (CH) domain maps to 1–111 (MNPEEQIVTW…TLLAVNKATE (111 aa)). Positions 115–151 (SERPCGRSSSLSAANTSQTNPQGAVSSTVSGLQRQSK) are disordered. Polar residues predominate over residues 121–151 (RSSSLSAANTSQTNPQGAVSSTVSGLQRQSK). S126 is subject to Phosphoserine. T133 is subject to Phosphothreonine. Residues S144 and S150 each carry the phosphoserine modification. Positions 160-219 (SHQLIVKARFNFKQTNEDELSVCKGDIIYVTRVEEGGWWEGTLNGRTGWFPSNYVREIKS) constitute an SH3 domain. S225 is subject to Phosphoserine. The region spanning 241 to 421 (YYTVVLQNIL…KTLMGQCQDL (181 aa)) is the DH domain. The 106-residue stretch at 443 to 548 (DIKNLGNVIF…WLEQLNRLIR (106 aa)) folds into the PH domain. Position 488 is a phosphoserine (S488). Positions 561–572 (SSSCSAHSSFSS) are enriched in low complexity. The interval 561 to 581 (SSSCSAHSSFSSTGQPRGPLE) is disordered. A phosphoserine mark is found at S640 and S684.

In terms of assembly, interacts with PAK kinases through the SH3 domain. Interacts with GIT1. Component of cytoplasmic complexes, which also contain PXN, GIT1 and PAK1. Interacts with PARVB. Interacts with BIN2. Identified in a complex with BIN2 and GIT2. Interacts with PARVG; the guanine nucleotide exchange factor activity of ARHGEF6 is essential for PARVG-induced enhancement of cell spreading. As to expression, ubiquitous.

It localises to the cell projection. The protein resides in the lamellipodium. Acts as a RAC1 guanine nucleotide exchange factor (GEF). In Homo sapiens (Human), this protein is Rho guanine nucleotide exchange factor 6 (ARHGEF6).